The chain runs to 173 residues: UPF0102 protein Psyc_1908 (173 aa).

This sequence belongs to the UPF0102 family.

The chain is UPF0102 protein Psyc_1908 from Psychrobacter arcticus (strain DSM 17307 / VKM B-2377 / 273-4).